The primary structure comprises 960 residues: Anoctamin-1 (960 aa).

Over 1–333 the chain is Cytoplasmic; it reads MRVPEKYSTL…FGEKVGLYFA (333 aa). The interval 92–115 is disordered; that stretch reads TRSVRQDQPLPGKGSPVDAGSPEV. Ser-196 is modified (phosphoserine). A helical membrane pass occupies residues 334–354; the sequence is WLGAYTQMLIPASIVGVIVFL. Over 355-406 the chain is Extracellular; the sequence is YGCATVDENIPSMEMCDQRYNITMCPLCDKTCSYWKMSSACATARASHLFDN. 4 disulfides stabilise this stretch: Cys-370/Cys-395, Cys-379/Cys-836, Cys-382/Cys-386, and Cys-625/Cys-630. A helical membrane pass occupies residues 407–427; it reads PATVFFSVFMALWAATFMEHW. A Ca(2+)-binding site is contributed by Glu-425. The Cytoplasmic segment spans residues 428 to 493; that stretch reads KRKQMRLNYR…RDRFPAYFTN (66 aa). Residues 494-514 form a helical membrane-spanning segment; sequence LVSIIFMIAVTFAIVLGVIIY. At 515 to 542 the chain is on the extracellular side; that stretch reads RISTAAALAMNSSPSVRSNIRVTVTATA. Residues 543–563 traverse the membrane as a helical segment; the sequence is VIINLVVIILLDEVYGCIARW. The Cytoplasmic portion of the chain corresponds to 564-581; sequence LTKIEVPKTEKSFEERLT. Residues 582–602 form a helical membrane-spanning segment; sequence FKAFLLKFVNSYTPIFYVAFF. Residues 603-631 lie on the Extracellular side of the membrane; it reads KGRFVGRPGDYVYIFRSFRMEECAPGGCL. The chain crosses the membrane as a helical span at residues 632–652; that stretch reads MELCIQLSIIMLGKQLIQNNL. Ca(2+) is bound by residues Asn-651, Glu-654, Glu-702, Glu-705, Glu-734, and Asp-738. Topologically, residues 653-699 are cytoplasmic; sequence FEIGIPKMKKFIRYLKLRRQSPSDREEYVKRKQRYEVDFNLEPFAGL. 2 consecutive transmembrane segments (helical) span residues 700–720 and 721–741; these read TPEYMEMIIQFGFVTLFVASF and PLAPLFALLNNIIEIRLDAKK. The Cytoplasmic portion of the chain corresponds to 742–758; sequence FVTELRRPVAIRAKDIG. The helical transmembrane segment at 759 to 779 threads the bilayer; the sequence is IWYNILRGVGKLAVIINAFVI. The Extracellular segment spans residues 780-866; the sequence is SFTSDFIPRL…FWAVLAARLA (87 aa). Asn-806 is a glycosylation site (N-linked (GlcNAc...) asparagine). The chain crosses the membrane as a helical span at residues 867 to 887; that stretch reads FVIVFQNLVMFMSDFVDWVIP. Asp-883 and Asp-888 together coordinate Ca(2+). The Cytoplasmic portion of the chain corresponds to 888-960; sequence DIPKDISQQI…PSYEYHGDAL (73 aa). Residues 928–960 form a disordered region; that stretch reads PRDVPCNNHSPTTHPEAGDGSPVPSYEYHGDAL.

Belongs to the anoctamin family. In terms of assembly, homodimer. Interacts with CFTR. Interacts with TRPV4. Expressed at the apical surface of the vomeronasal epithelium (at protein level). Expressed in the lateral and septal nasal glands (at protein level). Highly expressed in pulmonary bronchiole epithelial cells, pancreatic and submandibular gland acinar cells, kidney proximal tubule, all retinal cell layers, most sensory cells of dorsal root ganglia, Leydig cells and spermatocytes (at protein level). In the dorsal root ganglia, detected in small-diameter nociceptive neurons and in larger myelinated neurons (at protein level). In the dorsal root ganglia, expressed in MrgprA3-positive neurons (at protein level). In the developing brain, highly expressed in the ventricular zone and subventricular zone at 12.5 dpc and 14.5 dpc where it is detected in radial glial cells but not in neurons with expression dramatically decreased at P1 (at protein level). Highly expressed in the endometrial stroma (at protein level). In taste buds of the vallate papillae, expressed in the apical region of type I taste cells (at protein level). In the kidney, expressed in the collecting duct (at protein level). In the retina, strongly expressed in the outer and inner plexiform layers, weakly expressed in some somata in the inner nuclear layer and ganglion cell layer and not expressed in the outer nuclear layer (at protein level). Expressed in various retinal neurons including rod bipolar cells (at protein level). Expressed in eye, brain, myometrium and endometrium with higher levels in endometrium than myometrium in estrus and day 18 pregnant mice. Not detected in uterine smooth muscle cells. Expressed at high levels in the thyroid gland and gastrointestinal muscles.

The protein resides in the apical cell membrane. Its subcellular location is the presynapse. The catalysed reaction is chloride(in) = chloride(out). Its activity is regulated as follows. ATP and calmodulin are essential for its activation. Channel activity is inhibited by CFTR protein and by chloride inhibitors such as niflumic acid (NFA) and 4,4'-diisothiocyanatostilbene-2,2'-disulfonic acid (DIDS). Activated by heat with activation seen at temperatures above 44 degrees Celsius. Activated by BDNF in radial glial cells. Its function is as follows. Calcium-activated chloride channel (CaCC). Plays a role in transepithelial anion transport and smooth muscle contraction. Required for the normal functioning of the interstitial cells of Cajal (ICCs) which generate electrical pacemaker activity in gastrointestinal smooth muscles. Acts as a major contributor to basal and stimulated chloride conductance in airway epithelial cells and plays an important role in tracheal cartilage development. Required for CFTR activation by enhancing endoplasmic reticulum Ca(2+) store release and is also required for CFTR membrane expression. Required for basal and ATP-dependent mucus secretion in airways and intestine, probably by controlling exocytosis of mucus-filled granules by providing Ca(2+) to an apical signaling compartment. Contributes to airway mucus expression induced by interleukins IL3 and IL8 and by the asthma-associated protein CLCA1 and is required for expression of mucin MUC5AC. However, was shown in another study not to be required for MUC5AC expression. Plays a role in the propagation of Ca(2+) waves in Kolliker's organ in the cochlea and contributes to the refinement of auditory brainstem circuitries prior to hearing onset. In vomeronasal sensory neurons, modulates spontaneous firing patterns in the absence of stimuli as well as the firing pattern of pheromone-evoked activity. Responsible for calcium-activated chloride channel activity in type I taste cells of the vallate papillae. Acts as a heat sensor in nociceptive neurons. In dorsal root ganglion neurons, plays a role in mediating non-histaminergic Mas-related G-protein coupled receptor (MRGPR)-dependent itching, acting as a downstream effector of MRGPRs. In the developing brain, required for the Ca(2+)-dependent process extension of radial glial cells. The chain is Anoctamin-1 (Ano1) from Mus musculus (Mouse).